We begin with the raw amino-acid sequence, 362 residues long: B3 domain-containing protein IDEF1 (362 aa).

Positions 30–91 (VPFPNPFPAP…TPTPTPRGFA (62 aa)) are disordered. The span at 48 to 70 (PHNHNHNHNHNHNIHNSHNHNHN) shows a compositional bias: basic residues. Residues 253–355 (LRKELTKSDV…KFIIRGEKAI (103 aa)) constitute a DNA-binding region (TF-B3).

Post-translationally, polyubiquitinated. Ubiquitination leads to its subsequent degradation via the proteasome pathway. In terms of tissue distribution, expressed in roots.

It is found in the nucleus. Transcription regulator involved in iron deficiency response and tolerance. May regulate directly iron transporters or other transcription factors involved in iron-deficiency response. Binds specifically to the DNA sequence 5'-CATGC-3' of the IDE1 element found in the promoter of the barley iron deficiency-inducible gene IDS2. This is B3 domain-containing protein IDEF1 (IDEF1) from Oryza sativa subsp. japonica (Rice).